A 784-amino-acid polypeptide reads, in one-letter code: N-alpha-acetyltransferase 35, NatC auxiliary subunit homolog (784 aa).

Disordered regions lie at residues 1–23 (MYPS…VAEP), 320–353 (NTLD…PPAF), and 606–630 (SKTQ…NKKT). The span at 617 to 630 (KNRKAAKPKKNKKT) shows a compositional bias: basic residues.

Belongs to the MAK10 family. In terms of assembly, component of the N-terminal acetyltransferase C (NatC) complex, which is composed of Naa35, Sbat/Naa38 and Naa30A.

The protein localises to the cytoplasm. In terms of biological role, auxillary component of the N-terminal acetyltransferase C (NatC) complex which catalyzes acetylation of N-terminal methionine residues. This is N-alpha-acetyltransferase 35, NatC auxiliary subunit homolog from Drosophila melanogaster (Fruit fly).